A 364-amino-acid polypeptide reads, in one-letter code: DNA replication and repair protein RecF (364 aa).

Residue 30 to 37 participates in ATP binding; sequence GNNAQGKT.

Belongs to the RecF family.

It is found in the cytoplasm. Its function is as follows. The RecF protein is involved in DNA metabolism; it is required for DNA replication and normal SOS inducibility. RecF binds preferentially to single-stranded, linear DNA. It also seems to bind ATP. The protein is DNA replication and repair protein RecF of Clostridium botulinum (strain ATCC 19397 / Type A).